Reading from the N-terminus, the 293-residue chain is Elongation factor Ts (293 aa).

Positions 79–82 (TDFV) are involved in Mg(2+) ion dislocation from EF-Tu.

It belongs to the EF-Ts family.

The protein resides in the cytoplasm. In terms of biological role, associates with the EF-Tu.GDP complex and induces the exchange of GDP to GTP. It remains bound to the aminoacyl-tRNA.EF-Tu.GTP complex up to the GTP hydrolysis stage on the ribosome. The chain is Elongation factor Ts from Bacillus licheniformis (strain ATCC 14580 / DSM 13 / JCM 2505 / CCUG 7422 / NBRC 12200 / NCIMB 9375 / NCTC 10341 / NRRL NRS-1264 / Gibson 46).